Here is a 677-residue protein sequence, read N- to C-terminus: UvrABC system protein B (677 aa).

The region spanning 24-412 (EGVLEGVPAQ…EGIVVEQVIR (389 aa)) is the Helicase ATP-binding domain. 37–44 (GVTGSGKT) contributes to the ATP binding site. Positions 90-113 (YYDYYQPEAYLPSSDTYIEKDLAI) match the Beta-hairpin motif. The Helicase C-terminal domain occupies 429 to 591 (QIDDLMEEIQ…ITPQQIKKAR (163 aa)). The UVR domain occupies 635 to 670 (EKSMERTRKLMQEAAKKLEFIEAAQYRDELLKMEDL).

Belongs to the UvrB family. In terms of assembly, forms a heterotetramer with UvrA during the search for lesions. Interacts with UvrC in an incision complex.

It is found in the cytoplasm. In terms of biological role, the UvrABC repair system catalyzes the recognition and processing of DNA lesions. A damage recognition complex composed of 2 UvrA and 2 UvrB subunits scans DNA for abnormalities. Upon binding of the UvrA(2)B(2) complex to a putative damaged site, the DNA wraps around one UvrB monomer. DNA wrap is dependent on ATP binding by UvrB and probably causes local melting of the DNA helix, facilitating insertion of UvrB beta-hairpin between the DNA strands. Then UvrB probes one DNA strand for the presence of a lesion. If a lesion is found the UvrA subunits dissociate and the UvrB-DNA preincision complex is formed. This complex is subsequently bound by UvrC and the second UvrB is released. If no lesion is found, the DNA wraps around the other UvrB subunit that will check the other stand for damage. The chain is UvrABC system protein B from Bacteroides fragilis (strain YCH46).